Here is a 101-residue protein sequence, read N- to C-terminus: Large ribosomal subunit protein uL24 (101 aa).

It belongs to the universal ribosomal protein uL24 family. As to quaternary structure, part of the 50S ribosomal subunit.

One of two assembly initiator proteins, it binds directly to the 5'-end of the 23S rRNA, where it nucleates assembly of the 50S subunit. Functionally, one of the proteins that surrounds the polypeptide exit tunnel on the outside of the subunit. The sequence is that of Large ribosomal subunit protein uL24 from Streptococcus suis (strain 98HAH33).